Consider the following 199-residue polypeptide: Probable chemoreceptor glutamine deamidase CheD (199 aa).

It belongs to the CheD family.

It carries out the reaction L-glutaminyl-[protein] + H2O = L-glutamyl-[protein] + NH4(+). In terms of biological role, probably deamidates glutamine residues to glutamate on methyl-accepting chemotaxis receptors (MCPs), playing an important role in chemotaxis. This is Probable chemoreceptor glutamine deamidase CheD from Nitratidesulfovibrio vulgaris (strain ATCC 29579 / DSM 644 / CCUG 34227 / NCIMB 8303 / VKM B-1760 / Hildenborough) (Desulfovibrio vulgaris).